Here is a 184-residue protein sequence, read N- to C-terminus: Ribosome-recycling factor (184 aa).

This sequence belongs to the RRF family.

It localises to the cytoplasm. Its function is as follows. Responsible for the release of ribosomes from messenger RNA at the termination of protein biosynthesis. May increase the efficiency of translation by recycling ribosomes from one round of translation to another. The protein is Ribosome-recycling factor of Caldicellulosiruptor bescii (strain ATCC BAA-1888 / DSM 6725 / KCTC 15123 / Z-1320) (Anaerocellum thermophilum).